Here is a 985-residue protein sequence, read N- to C-terminus: MEEKRRDSAGTLAFAGSSGDSPASEPMPAPRRRGGGLKRKANALGGSNFFSSAPSKRMLTREKAMLASFSPVHNGPLTRARQAPSIMPSAADGVKSEVLNVAVGADGEKPKEEEERNKAIREWEALEAKIEADFEAIRSRDSNVHVVPNHCGWFSWEKIHPLEERSLPSFFNGKLEGRTSEVYREIRNWIMGKFHSNPNIQIELKDLTELEVGDSEAKQEVMEFLDYWGLINFHPFPPTDTGSTASDHDDLGDKESLLNSLYRFQVDEACPPLVHKPRFTAQATPSGLFPDPMAADELLKQEGPAVEYHCNSCSADCSRKRYHCPKQADFDLCTECFNSGKFSSDMSSSDFILMEPAEAPGVGSGKWTDQETLLLLEALEIFKENWNEIAEHVATKTKAQCMLHFLQMPIEDAFLDQIDYKDPISKDTTDLAVSKDDNSVLKDAPEEAENKKRVDEDETMKEVPEPEDGNEEKVSQESSKPGDASEETNEMEAEQKTPKLETAIEERCKDEADENIALKALTEAFEDVGHSSTPEASFSFADLGNPVMGLAAFLVRLAGSDVATASARASIKSLHSNSGMLLATRHCYILEDPPDNKKDPTKSKSCSADAEGNDDNSHKDDQPEEKSKKAEEVSLNSDDREMPDTDTGKETQDSVSEEKQPGSRTENSTTKLDAVQEKRSSKPVTTDNSEKPVDIICPSQDKCSGKELQEPLKDGNKLSSENKDASQSTVSQSAADASQPEASRDVEMKDTLQSEKDPEDVVKTVGEKVQLAKEEGANDVLSTPDKSVSQQPIGSASAPENGTAGGNPNIEGKKEKDICEGTKDKYNIEKLKRAAISAISAAAVKAKNLAKQEEDQIRQLSGSLIEKQLHKLEAKLSIFNEAESLTMRVREQLERSRQRLYHERAQIIAARLGVPPSMSSKASLPTNRIAANFANVAQRPPMGMAFPRPPMPRPPGFPVPGSFVAATTMTGSSDPSPGSDNVSSV.

Positions 1 to 55 (MEEKRRDSAGTLAFAGSSGDSPASEPMPAPRRRGGGLKRKANALGGSNFFSSAPS) are disordered. The span at 30–41 (PRRRGGGLKRKA) shows a compositional bias: basic residues. The stretch at 108-133 (EKPKEEEERNKAIREWEALEAKIEAD) forms a coiled coil. The region spanning 145–242 (HVVPNHCGWF…FHPFPPTDTG (98 aa)) is the SWIRM domain. The ZZ-type; degenerate zinc finger occupies 305 to 359 (AVEYHCNSCSADCSRKRYHCPKQADFDLCTECFNSGKFSSDMSSSDFILMEPAEA). 4 residues coordinate Zn(2+): C310, C313, C333, and C336. One can recognise an SANT domain in the interval 362-413 (VGSGKWTDQETLLLLEALEIFKENWNEIAEHVATKTKAQCMLHFLQMPIEDA). 3 stretches are compositionally biased toward basic and acidic residues: residues 428 to 464 (TTDLAVSKDDNSVLKDAPEEAENKKRVDEDETMKEVP), 493 to 502 (AEQKTPKLET), and 615 to 661 (DNSH…EKQP). Disordered regions lie at residues 428 to 502 (TTDL…KLET) and 591 to 814 (EDPP…EGKK). The span at 662 to 671 (GSRTENSTTK) shows a compositional bias: polar residues. The segment covering 703-724 (CSGKELQEPLKDGNKLSSENKD) has biased composition (basic and acidic residues). The segment covering 725–736 (ASQSTVSQSAAD) has biased composition (polar residues). Basic and acidic residues predominate over residues 742 to 776 (ASRDVEMKDTLQSEKDPEDVVKTVGEKVQLAKEEG). Residues 780-800 (VLSTPDKSVSQQPIGSASAPE) are compositionally biased toward polar residues. Residues 839–900 (ISAAAVKAKN…EQLERSRQRL (62 aa)) are a coiled coil. A disordered region spans residues 944–985 (MAFPRPPMPRPPGFPVPGSFVAATTMTGSSDPSPGSDNVSSV). Residues 947-958 (PRPPMPRPPGFP) are compositionally biased toward pro residues. Residues 965–985 (AATTMTGSSDPSPGSDNVSSV) show a composition bias toward polar residues.

Interacts with SWI3B, but not with BSH. Component of a RNA-directed DNA methylation (RdDM) complex that contains at least MORC6, MORC1/CRT1, MORC2, SWI3D and SUVH9. Interacts with MORC6 and SUVH9. As to expression, ubiquitously expressed.

The protein localises to the nucleus. Its function is as follows. Component of a multiprotein complex equivalent of the SWI/SNF complex, an ATP-dependent chromatin-remodeling complex, which is required for the positive and negative regulation of gene expression of a large number of genes. It changes chromatin structure by altering DNA-histone contacts within a nucleosome, leading eventually to a change in nucleosome position, thus facilitating or repressing binding of gene-specific transcription factors. This Arabidopsis thaliana (Mouse-ear cress) protein is SWI/SNF complex subunit SWI3D (SWI3D).